The primary structure comprises 396 residues: Calsequestrin-1 (396 aa).

The N-terminal stretch at 1–34 is a signal peptide; the sequence is MSATDRMGPRAVPGLRLALLLLLVLGTPKSGVQG. Position 43 is a phosphotyrosine (Y43). Position 81 is a phosphoserine (S81). Residue T124 is modified to Phosphothreonine. A Phosphoserine modification is found at S216. An N-linked (GlcNAc...) asparagine glycan is attached at N350.

This sequence belongs to the calsequestrin family. As to quaternary structure, monomer; increases in response to a depletion of intracellular calcium. Homodimer. Homotetramer and homopolymer. Can form linear homooligomers. Ca(2+) ions promote oligomerization. Interacts (via C-terminal end and preferentially with the monomeric form) with STIM1; this interaction increases in response to a depletion of intracellular calcium, decreases both STIM1 aggregation and clustering, interaction of STIM1 with ORAI1 and store-operated Ca(2+) entry (SOCE) activity. Interacts with ASPH and TRDN. In terms of processing, N-glycosylated. In terms of tissue distribution, expressed in myoblasts (at protein level).

Its subcellular location is the endoplasmic reticulum. The protein resides in the sarcoplasmic reticulum. It localises to the sarcoplasmic reticulum lumen. It is found in the sarcoplasmic reticulum membrane. The protein localises to the mitochondrion matrix. Calsequestrin is a high-capacity, moderate affinity, calcium-binding protein and thus acts as an internal calcium store in muscle. Calcium ions are bound by clusters of acidic residues at the protein surface, often at the interface between subunits. Can bind around 80 Ca(2+) ions. Regulates the release of lumenal Ca(2+) via the calcium release channel RYR1; this plays an important role in triggering muscle contraction. Negatively regulates store-operated Ca(2+) entry (SOCE) activity. This chain is Calsequestrin-1 (CASQ1), found in Homo sapiens (Human).